The following is a 119-amino-acid chain: T cell receptor alpha variable 29/delta variable 5 (119 aa).

A signal peptide spans 1–21 (MAMLLGASVLILWLQPDWVNS). The 98-residue stretch at 22–119 (QQKNDDQQVK…DSAVYFCAAS (98 aa)) folds into the Ig-like domain. Cys-49 and Cys-116 are disulfide-bonded. A glycan (N-linked (GlcNAc...) asparagine) is linked at Asn-93.

In terms of assembly, alpha-beta TR is a heterodimer composed of an alpha and beta chain; disulfide-linked. The alpha-beta TR is associated with the transmembrane signaling CD3 coreceptor proteins to form the TR-CD3 (TcR or TCR). The assembly of alpha-beta TR heterodimers with CD3 occurs in the endoplasmic reticulum where a single alpha-beta TR heterodimer associates with one CD3D-CD3E heterodimer, one CD3G-CD3E heterodimer and one CD247 homodimer forming a stable octameric structure. CD3D-CD3E and CD3G-CD3E heterodimers preferentially associate with TR alpha and TR beta chains, respectively. The association of the CD247 homodimer is the last step of TcR assembly in the endoplasmic reticulum and is required for transport to the cell surface.

The protein resides in the cell membrane. In terms of biological role, v region of the variable domain of T cell receptor (TR) alpha chain that participates in the antigen recognition. Alpha-beta T cell receptors are antigen specific receptors which are essential to the immune response and are present on the cell surface of T lymphocytes. Recognize peptide-major histocompatibility (MH) (pMH) complexes that are displayed by antigen presenting cells (APC), a prerequisite for efficient T cell adaptive immunity against pathogens. Binding of alpha-beta TR to pMH complex initiates TR-CD3 clustering on the cell surface and intracellular activation of LCK that phosphorylates the ITAM motifs of CD3G, CD3D, CD3E and CD247 enabling the recruitment of ZAP70. In turn ZAP70 phosphorylates LAT, which recruits numerous signaling molecules to form the LAT signalosome. The LAT signalosome propagates signal branching to three major signaling pathways, the calcium, the mitogen-activated protein kinase (MAPK) kinase and the nuclear factor NF-kappa-B (NF-kB) pathways, leading to the mobilization of transcription factors that are critical for gene expression and essential for T cell growth and differentiation. The T cell repertoire is generated in the thymus, by V-(D)-J rearrangement. This repertoire is then shaped by intrathymic selection events to generate a peripheral T cell pool of self-MH restricted, non-autoaggressive T cells. Post-thymic interaction of alpha-beta TR with the pMH complexes shapes TR structural and functional avidity. The chain is T cell receptor alpha variable 29/delta variable 5 from Homo sapiens (Human).